We begin with the raw amino-acid sequence, 192 residues long: Adenylate kinase (192 aa).

Glycine 10–threonine 15 lines the ATP pocket. Positions serine 30 to valine 59 are NMP. AMP contacts are provided by residues threonine 31, arginine 36, alanine 57–valine 59, glycine 85–arginine 88, and glutamine 92. Positions lysine 126–aspartate 142 are LID. Position 127 (arginine 127) interacts with ATP. AMP contacts are provided by arginine 139 and arginine 150. Position 178 (methionine 178) interacts with ATP.

It belongs to the adenylate kinase family. In terms of assembly, monomer.

The protein resides in the cytoplasm. The enzyme catalyses AMP + ATP = 2 ADP. It participates in purine metabolism; AMP biosynthesis via salvage pathway; AMP from ADP: step 1/1. In terms of biological role, catalyzes the reversible transfer of the terminal phosphate group between ATP and AMP. Plays an important role in cellular energy homeostasis and in adenine nucleotide metabolism. This is Adenylate kinase from Bartonella quintana (strain Toulouse) (Rochalimaea quintana).